The primary structure comprises 63 residues: Synergistic-type venom protein C9S3, chain 2 (63 aa).

3 disulfides stabilise this stretch: Cys3–Cys24, Cys17–Cys42, and Cys46–Cys57.

The protein belongs to the three-finger toxin family. Short-chain subfamily. Aminergic toxin sub-subfamily. In terms of assembly, heterodimer of C9S3 chain 1 (AC P01408) and chain 2, linked by at least two disulfide bonds. Expressed by the venom gland.

The protein resides in the secreted. This protein shows a synergetic toxic effect in that it enhances the toxicity of other D.angusticeps toxins. The sequence is that of Synergistic-type venom protein C9S3, chain 2 from Dendroaspis angusticeps (Eastern green mamba).